The chain runs to 485 residues: Cobyric acid synthase (485 aa).

The 188-residue stretch at 252–439 folds into the GATase cobBQ-type domain; the sequence is KVRIAVPILP…VHGLFGDDRQ (188 aa). Cysteine 334 serves as the catalytic Nucleophile. Histidine 431 is an active-site residue.

The protein belongs to the CobB/CobQ family. CobQ subfamily.

It participates in cofactor biosynthesis; adenosylcobalamin biosynthesis. Catalyzes amidations at positions B, D, E, and G on adenosylcobyrinic A,C-diamide. NH(2) groups are provided by glutamine, and one molecule of ATP is hydrogenolyzed for each amidation. This is Cobyric acid synthase from Azorhizobium caulinodans (strain ATCC 43989 / DSM 5975 / JCM 20966 / LMG 6465 / NBRC 14845 / NCIMB 13405 / ORS 571).